Consider the following 397-residue polypeptide: UDP-GlcNAc:betaGal beta-1,3-N-acetylglucosaminyltransferase 7 (397 aa).

The Cytoplasmic segment spans residues 1–6; sequence MSLWKK. The helical; Signal-anchor for type II membrane protein transmembrane segment at 7–26 threads the bilayer; sequence TLYKSVCLALALLVAVTVFQ. Residues 27 to 397 lie on the Lumenal side of the membrane; that stretch reads RSVTPGQFLQ…LTCSLKFQVL (371 aa). Residues Asn-84, Asn-90, Asn-210, and Asn-387 are each glycosylated (N-linked (GlcNAc...) asparagine).

It belongs to the glycosyltransferase 31 family.

The protein resides in the golgi apparatus membrane. Its pathway is protein modification; protein glycosylation. In terms of biological role, N-acetyl glucosamine (GlcNAc) transferase that catalyzes the transfer of GlcNAc via a beta1-&gt;3 linkage from UDP-GlcNAc to the non-reducing terminal galactose (Gal) in the linearly growing chain of N- and O-linked keratan sulfate proteoglycans. Cooperates with B4GALT4 galactosyltransferase and CHST6 and CHST1 sulfotransferases to construct and elongate mono- and disulfated disaccharide units [-&gt;3Galbeta1-&gt;4(6-sulfoGlcNAcbeta)1-&gt;] and [-&gt;3(6-sulfoGalbeta)1-&gt;4(6-sulfoGlcNAcbeta)1-&gt;] within keratan sulfate polymer. Involved in biosynthesis of N-linked keratan sulfate proteoglycans in cornea, with an impact on proteoglycan fibril organization and corneal transparency. May play a role in the maintenance of tissue architecture by suppressing cellular motility and invasion. In Rattus norvegicus (Rat), this protein is UDP-GlcNAc:betaGal beta-1,3-N-acetylglucosaminyltransferase 7 (B3gnt7).